The primary structure comprises 493 residues: Probable protein phosphatase 2C 40 (493 aa).

In terms of domain architecture, PPM-type phosphatase spans 145–480 (LLSAMEVQVA…DDVTIMVITL (336 aa)). Asp180, Gly181, Asp408, and Asp471 together coordinate Mn(2+).

This sequence belongs to the PP2C family. Requires Mg(2+) as cofactor. The cofactor is Mn(2+).

The enzyme catalyses O-phospho-L-seryl-[protein] + H2O = L-seryl-[protein] + phosphate. The catalysed reaction is O-phospho-L-threonyl-[protein] + H2O = L-threonyl-[protein] + phosphate. The sequence is that of Probable protein phosphatase 2C 40 from Arabidopsis thaliana (Mouse-ear cress).